Reading from the N-terminus, the 353-residue chain is Guanine nucleotide-binding protein G(q) subunit alpha (353 aa).

S-palmitoyl cysteine attachment occurs at residues Cys-3 and Cys-4. The region spanning 32–353 (RELKLLLLGT…QLNLKEYNLV (322 aa)) is the G-alpha domain. Positions 35-48 (KLLLLGTGESGKST) are G1 motif. GTP is bound by residues 40-47 (GTGESGKS), 174-180 (LRVRVPT), 199-203 (DVGGQ), 268-271 (NKKD), and Ala-325. Residues Ser-47 and Thr-180 each contribute to the Mg(2+) site. Positions 172 to 180 (DILRVRVPT) are G2 motif. Positions 195-204 (FRMVDVGGQR) are G3 motif. A G4 motif region spans residues 264–271 (ILFLNKKD). The tract at residues 323–328 (TCATDT) is G5 motif.

It belongs to the G-alpha family. G(q) subfamily. G proteins are composed of 3 units; alpha, beta and gamma. The alpha chain contains the guanine nucleotide binding site.

In terms of biological role, guanine nucleotide-binding proteins (G proteins) are involved as modulators or transducers in various transmembrane signaling systems. The polypeptide is Guanine nucleotide-binding protein G(q) subunit alpha (SCGQA) (Mizuhopecten yessoensis (Japanese scallop)).